Reading from the N-terminus, the 294-residue chain is 4-hydroxy-tetrahydrodipicolinate synthase (294 aa).

Thr45 is a pyruvate binding site. The active-site Proton donor/acceptor is the Tyr133. The Schiff-base intermediate with substrate role is filled by Lys161. Position 203 (Ile203) interacts with pyruvate.

This sequence belongs to the DapA family. Homotetramer; dimer of dimers.

Its subcellular location is the cytoplasm. The catalysed reaction is L-aspartate 4-semialdehyde + pyruvate = (2S,4S)-4-hydroxy-2,3,4,5-tetrahydrodipicolinate + H2O + H(+). It functions in the pathway amino-acid biosynthesis; L-lysine biosynthesis via DAP pathway; (S)-tetrahydrodipicolinate from L-aspartate: step 3/4. Its function is as follows. Catalyzes the condensation of (S)-aspartate-beta-semialdehyde [(S)-ASA] and pyruvate to 4-hydroxy-tetrahydrodipicolinate (HTPA). This Alcanivorax borkumensis (strain ATCC 700651 / DSM 11573 / NCIMB 13689 / SK2) protein is 4-hydroxy-tetrahydrodipicolinate synthase.